The sequence spans 512 residues: Pantetheinase (512 aa).

The first 23 residues, 1-23, serve as a signal peptide directing secretion; that stretch reads MGMSWWLACAAAFSALCVLKASS. Residues 32–308 form the CN hydrolase domain; sequence YEHAVILPKD…GKLLFAQLKS (277 aa). Glutamate 81 functions as the Proton acceptor in the catalytic mechanism. N-linked (GlcNAc...) asparagine glycosylation is found at asparagine 132 and asparagine 148. Lysine 180 acts as the Proton donor in catalysis. The active-site Nucleophile is cysteine 213. N-linked (GlcNAc...) asparagine glycosylation is found at asparagine 316 and asparagine 354. A lipid anchor (GPI-anchor amidated asparagine) is attached at asparagine 488. Positions 489-512 are cleaved as a propeptide — removed in mature form; that stretch reads ASSDFIAHSLIIMLIVTPIIHYLC.

Belongs to the carbon-nitrogen hydrolase superfamily. BTD/VNN family. As to quaternary structure, monomer. N-glycosylated. Detected in kidney (at protein level). Ubiquitous.

The protein localises to the cell membrane. The enzyme catalyses (R)-pantetheine + H2O = cysteamine + (R)-pantothenate. Its function is as follows. Amidohydrolase that hydrolyzes specifically one of the carboamide linkages in D-pantetheine thus recycling pantothenic acid (vitamin B5) and releasing cysteamine. In Mus musculus (Mouse), this protein is Pantetheinase (Vnn1).